Consider the following 376-residue polypeptide: Mitogen-activated protein kinase 6 (376 aa).

The 287-residue stretch at 43 to 329 (APPIRPIGRG…VDEALHHPYL (287 aa)) folds into the Protein kinase domain. ATP contacts are provided by residues 49-57 (IGRGAYGIV) and lysine 72. Residue aspartate 169 is the Proton acceptor of the active site. Threonine 201 is modified (phosphothreonine). The TXY signature appears at 201–203 (TEY). Tyrosine 203 is modified (phosphotyrosine).

Belongs to the protein kinase superfamily. CMGC Ser/Thr protein kinase family. MAP kinase subfamily. In terms of processing, dually phosphorylated on Thr-201 and Tyr-203, which activates the enzyme.

The catalysed reaction is L-seryl-[protein] + ATP = O-phospho-L-seryl-[protein] + ADP + H(+). It catalyses the reaction L-threonyl-[protein] + ATP = O-phospho-L-threonyl-[protein] + ADP + H(+). With respect to regulation, activated by threonine and tyrosine phosphorylation. The protein is Mitogen-activated protein kinase 6 (MPK6) of Oryza sativa subsp. japonica (Rice).